The following is a 2724-amino-acid chain: Eukaryotic translation initiation factor 2-alpha kinase 2 (2724 aa).

Topologically, residues 1–24 are cytoplasmic; the sequence is MLNMVDQKKGINNGSSTGVINNIN. The chain crosses the membrane as a helical span at residues 25-45; the sequence is GKIKNEFIFMYLIAAGGFSCV. Topologically, residues 46–673 are extracellular; sequence YKIKKKKSNK…KFYIKRHNQK (628 aa). Positions 112–153 are disordered; the sequence is KRERRGRRKEQQREQMGDKRREKRQQQRREKRKEQNTNTKKR. Positions 120 to 146 are enriched in basic and acidic residues; that stretch reads KEQQREQMGDKRREKRQQQRREKRKEQ. Residues 674-694 form a helical membrane-spanning segment; it reads TYFFENIIFYHYIIMLFLDIE. The Cytoplasmic portion of the chain corresponds to 695-718; it reads KYKNKFVSLFQYNLYRKLLKISKR. The chain crosses the membrane as a helical span at residues 719–739; the sequence is IVLMLHRIETNVICIFLLKHF. Topologically, residues 740–800 are extracellular; it reads EDYFIRKGIH…KKNIFNFFIE (61 aa). A helical membrane pass occupies residues 801–821; sequence LFLNNIQINIFKKFEILYLII. The Cytoplasmic portion of the chain corresponds to 822-832; the sequence is YFYNYFEKSKQ. Residues 833-853 traverse the membrane as a helical segment; that stretch reads FDIEGIGDIIYVWLSLINLFY. Residues 854 to 876 lie on the Extracellular side of the membrane; it reads DDKGKCIKILSKIFAKLNKKLYY. Residues 877–897 traverse the membrane as a helical segment; it reads VYWGKLYIIMNWTTIVDTIFI. At 898 to 908 the chain is on the cytoplasmic side; it reads RNVLSINREGN. Residues 909-929 form a helical membrane-spanning segment; the sequence is YYWVIIVLKMINYFVNVAYTL. At 930-996 the chain is on the extracellular side; the sequence is TRMDIFFIKV…KKNYDIYTKY (67 aa). The helical transmembrane segment at 997-1017 threads the bilayer; it reads AILFIYCFIIQAYYFDTLFNI. Residues 1018 to 2724 are Cytoplasmic-facing; the sequence is RSLESNEIAN…GDIFLPDKCP (1707 aa). Lys2029 lines the ATP pocket. Residues 2084–2719 enclose the Protein kinase domain; sequence KHYFTKCGIL…KIISAGDIFL (636 aa). The stretch at 2120–2155 forms a coiled coil; it reads INTLNEENQNMFCKNKEKKEENYKKIDTNISQFSEK. The Proton acceptor role is filled by Asp2229. The segment at 2479–2507 is disordered; it reads EKMDKNKIAAQKKKKKKENKHPIGRRSTN. Residues 2488–2502 are compositionally biased toward basic residues; it reads AQKKKKKKENKHPIG.

It belongs to the protein kinase superfamily. Ser/Thr protein kinase family. GCN2 subfamily. Auto-phosphorylated.

Its subcellular location is the membrane. It catalyses the reaction L-seryl-[protein] + ATP = O-phospho-L-seryl-[protein] + ADP + H(+). The enzyme catalyses L-threonyl-[protein] + ATP = O-phospho-L-threonyl-[protein] + ADP + H(+). Phosphorylates translation factor eIF2alpha in salivary gland sporozoites during dormancy, which leads to an inhibition of protein translation and accumulation of stalled mRNAs into granules. The polypeptide is Eukaryotic translation initiation factor 2-alpha kinase 2 (Plasmodium berghei (strain Anka)).